Here is a 265-residue protein sequence, read N- to C-terminus: Undecaprenyl-diphosphatase (265 aa).

7 consecutive transmembrane segments (helical) span residues 38–58 (SDMF…IIYW), 80–100 (LIVA…LGFE), 107–127 (PIAW…WAAA), 135–155 (ITWL…VFPG), 175–195 (AAAT…ASGY), 213–233 (ALAI…KWLL), and 244–264 (FAIY…TGMI).

The protein belongs to the UppP family.

The protein resides in the cell inner membrane. The enzyme catalyses di-trans,octa-cis-undecaprenyl diphosphate + H2O = di-trans,octa-cis-undecaprenyl phosphate + phosphate + H(+). Functionally, catalyzes the dephosphorylation of undecaprenyl diphosphate (UPP). Confers resistance to bacitracin. The protein is Undecaprenyl-diphosphatase of Rhizobium etli (strain ATCC 51251 / DSM 11541 / JCM 21823 / NBRC 15573 / CFN 42).